Reading from the N-terminus, the 524-residue chain is Serine/threonine-protein phosphatase 2A 56 kDa regulatory subunit gamma isoform (524 aa).

Residue Met-1 is modified to N-acetylmethionine. Positions 476–508 are disordered; it reads SDEARQAQKELKKDRPLVRRKSELPQDPHTEKA.

Belongs to the phosphatase 2A regulatory subunit B56 family. As to quaternary structure, PP2A consists of a common heterodimeric core enzyme, composed of PPP2CA a 36 kDa catalytic subunit (subunit C) and PPP2R1A a 65 kDa constant regulatory subunit (PR65 or subunit A), that associates with a variety of regulatory subunits. Proteins that associate with the core dimer include three families of regulatory subunits B (the R2/B/PR55/B55, R3/B''/PR72/PR130/PR59 and R5/B'/B56 families), the 48 kDa variable regulatory subunit, viral proteins, and cell signaling molecules. Interacts with SGO1. Interacts with SGO1; the interaction is direct. May interact with TP53. Interacts with IER3 and/or ERK kinases; regulates ERK dephosphorylation. Interacts with CIP2A; this interaction stabilizes CIP2A. As to expression, highest levels in heart, liver and brain. Lower levels in skeletal muscle, spleen, kidney and lung. Isoform 4 is testis-specific.

It localises to the nucleus. Its subcellular location is the chromosome. It is found in the centromere. In terms of biological role, the B regulatory subunit might modulate substrate selectivity and catalytic activity, and might also direct the localization of the catalytic enzyme to a particular subcellular compartment. The PP2A-PPP2R5C holoenzyme may activate TP53 and play a role in DNA damage-induced inhibition of cell proliferation. PP2A-PPP2R5C may also regulate the ERK signaling pathway through ERK dephosphorylation. This chain is Serine/threonine-protein phosphatase 2A 56 kDa regulatory subunit gamma isoform (Ppp2r5c), found in Mus musculus (Mouse).